The sequence spans 216 residues: Ceramide-1-phosphate transfer protein (216 aa).

The an N-acylsphingoid base 1-phosphate site is built by aspartate 56, lysine 60, arginine 108, arginine 112, and histidine 152.

Belongs to the GLTP family.

The protein localises to the cytoplasm. Its subcellular location is the cytosol. The protein resides in the golgi apparatus. It localises to the trans-Golgi network membrane. It is found in the cell membrane. The protein localises to the endosome membrane. Its subcellular location is the nucleus outer membrane. It carries out the reaction N-(hexadecanoyl)-sphing-4-enine-1-phosphate(in) = N-(hexadecanoyl)-sphing-4-enine-1-phosphate(out). The enzyme catalyses N-(9Z-octadecenoyl)-sphing-4-enine-1-phosphate(in) = N-(9Z-octadecenoyl)-sphing-4-enine-1-phosphate(out). In terms of biological role, mediates the intracellular transfer of ceramide-1-phosphate (C1P) between organelle membranes and the cell membrane. Required for normal structure of the Golgi stacks. Can bind phosphoceramides with a variety of aliphatic chains, but has a preference for lipids with saturated C16:0 or monounsaturated C18:1 aliphatic chains, and is inefficient with phosphoceramides containing lignoceryl (C24:0). Plays a role in the regulation of the cellular levels of ceramide-1-phosphate, and thereby contributes to the regulation of phospholipase PLA2G4A activity and the release of arachidonic acid. Has no activity with galactosylceramide, lactosylceramide, sphingomyelin, phosphatidylcholine, phosphatidic acid and ceramide. C1P transfer is stimulated by phosphatidylserine in C1P source vesicles. Regulates autophagy, inflammasome mediated IL1B and IL18 processing, and pyroptosis, but not apoptosis. The polypeptide is Ceramide-1-phosphate transfer protein (Mus musculus (Mouse)).